The chain runs to 178 residues: Protein GrpE (178 aa).

It belongs to the GrpE family. As to quaternary structure, homodimer.

The protein localises to the cytoplasm. Participates actively in the response to hyperosmotic and heat shock by preventing the aggregation of stress-denatured proteins, in association with DnaK and GrpE. It is the nucleotide exchange factor for DnaK and may function as a thermosensor. Unfolded proteins bind initially to DnaJ; upon interaction with the DnaJ-bound protein, DnaK hydrolyzes its bound ATP, resulting in the formation of a stable complex. GrpE releases ADP from DnaK; ATP binding to DnaK triggers the release of the substrate protein, thus completing the reaction cycle. Several rounds of ATP-dependent interactions between DnaJ, DnaK and GrpE are required for fully efficient folding. This is Protein GrpE from Rickettsia africae (strain ESF-5).